The chain runs to 594 residues: DNA ligase (594 aa).

Glu256 contacts ATP. Lys258 acts as the N6-AMP-lysine intermediate in catalysis. 6 residues coordinate ATP: Arg263, Arg279, Glu309, Phe349, Arg426, and Lys432.

This sequence belongs to the ATP-dependent DNA ligase family. Requires Mg(2+) as cofactor.

It catalyses the reaction ATP + (deoxyribonucleotide)n-3'-hydroxyl + 5'-phospho-(deoxyribonucleotide)m = (deoxyribonucleotide)n+m + AMP + diphosphate.. Functionally, DNA ligase that seals nicks in double-stranded DNA during DNA replication, DNA recombination and DNA repair. This Ignicoccus hospitalis (strain KIN4/I / DSM 18386 / JCM 14125) protein is DNA ligase.